Reading from the N-terminus, the 160-residue chain is MSGGAGVPDLPQIDASGMKVGIVASTWHSTICDALLDGALKVTESANVSEPTVVRVLGAIEIPVVAQALAADHEAVIALGVVIRGQTPHFDYVCDAVTQGLTRVSLDASTPVANGVLTTNTEEQALDRAGLPGSAEDKGAQAAAAALSTALTLQGLRGRS.

5-amino-6-(D-ribitylamino)uracil-binding positions include Trp27, 59–61 (AIE), and 81–83 (VVI). 86 to 87 (QT) contributes to the (2S)-2-hydroxy-3-oxobutyl phosphate binding site. His89 functions as the Proton donor in the catalytic mechanism. Asn114 provides a ligand contact to 5-amino-6-(D-ribitylamino)uracil. Position 128 (Arg128) interacts with (2S)-2-hydroxy-3-oxobutyl phosphate.

This sequence belongs to the DMRL synthase family. In terms of assembly, homopentamer.

The enzyme catalyses (2S)-2-hydroxy-3-oxobutyl phosphate + 5-amino-6-(D-ribitylamino)uracil = 6,7-dimethyl-8-(1-D-ribityl)lumazine + phosphate + 2 H2O + H(+). It functions in the pathway cofactor biosynthesis; riboflavin biosynthesis; riboflavin from 2-hydroxy-3-oxobutyl phosphate and 5-amino-6-(D-ribitylamino)uracil: step 1/2. Functionally, catalyzes the formation of 6,7-dimethyl-8-ribityllumazine by condensation of 5-amino-6-(D-ribitylamino)uracil with 3,4-dihydroxy-2-butanone 4-phosphate. This is the penultimate step in the biosynthesis of riboflavin. This is 6,7-dimethyl-8-ribityllumazine synthase from Mycobacterium sp. (strain JLS).